A 274-amino-acid polypeptide reads, in one-letter code: Factor H binding protein (274 aa).

An N-terminal signal peptide occupies residues 1–19 (MNRTAFCCLSLTTALILTA). Cys-20 carries N-palmitoyl cysteine lipidation. A lipid anchor (S-diacylglycerol cysteine) is attached at Cys-20. The tract at residues 27-119 (VAADIGAGLA…LESGEFQVYK (93 aa)) is domain A. The segment at 120-183 (QSHSALTAFQ…TAFGSDDAGG (64 aa)) is domain B. Residues 184–274 (KLTYTIDFAA…IRHIGLAAKQ (91 aa)) form a domain C region.

It belongs to the factor H binding-protein family. Binds to host factor H (fH from human). Both fHbp beta-barrels contact Sushi domains 6 and 7 in fH (also called complement control protein domains, CCP). This interaction probably mimics the normal (carbohydrate-dependent) mode of fH recruitement, regulating fH activity. Sucrose octasulphate inhibits the fHbp-fH interaction. Protein is lipidated in N.meningitidis upon growth in radioactive palmitic acid, probably on Cys-20.

It localises to the cell outer membrane. The protein resides in the secreted. The protein localises to the extracellular vesicle. Its subcellular location is the bacterial extracellular vesicle. Its function is as follows. A bacterial surface lipoprotein that binds host (human) complement factor H (fH, gene CFH), binding contributes to the avoidance of complement-mediated lysis by N.meningitidis. Binding of fH to the bacteria surface is independent of bacterial sialic acid moieties. fH binding affinity is high enough that it may sequester plasma fH, depleting its circulating levels and de-regulating complement in the host. This protein induces high levels of bactericidal antibodies in mice. The protein is Factor H binding protein (fhbP) of Neisseria meningitidis serogroup B (strain ATCC BAA-335 / MC58).